A 212-amino-acid polypeptide reads, in one-letter code: Thiamine-phosphate synthase (212 aa).

4-amino-2-methyl-5-(diphosphooxymethyl)pyrimidine-binding positions include 35–39 and asparagine 67; that span reads QLRDK. Aspartate 68 and aspartate 87 together coordinate Mg(2+). A 4-amino-2-methyl-5-(diphosphooxymethyl)pyrimidine-binding site is contributed by serine 106. 132–134 contacts 2-[(2R,5Z)-2-carboxy-4-methylthiazol-5(2H)-ylidene]ethyl phosphate; it reads TGS. A 4-amino-2-methyl-5-(diphosphooxymethyl)pyrimidine-binding site is contributed by lysine 135. 2-[(2R,5Z)-2-carboxy-4-methylthiazol-5(2H)-ylidene]ethyl phosphate-binding positions include glycine 163 and 183–184; that span reads IS.

The protein belongs to the thiamine-phosphate synthase family. Mg(2+) serves as cofactor.

It catalyses the reaction 2-[(2R,5Z)-2-carboxy-4-methylthiazol-5(2H)-ylidene]ethyl phosphate + 4-amino-2-methyl-5-(diphosphooxymethyl)pyrimidine + 2 H(+) = thiamine phosphate + CO2 + diphosphate. The enzyme catalyses 2-(2-carboxy-4-methylthiazol-5-yl)ethyl phosphate + 4-amino-2-methyl-5-(diphosphooxymethyl)pyrimidine + 2 H(+) = thiamine phosphate + CO2 + diphosphate. The catalysed reaction is 4-methyl-5-(2-phosphooxyethyl)-thiazole + 4-amino-2-methyl-5-(diphosphooxymethyl)pyrimidine + H(+) = thiamine phosphate + diphosphate. It functions in the pathway cofactor biosynthesis; thiamine diphosphate biosynthesis; thiamine phosphate from 4-amino-2-methyl-5-diphosphomethylpyrimidine and 4-methyl-5-(2-phosphoethyl)-thiazole: step 1/1. Condenses 4-methyl-5-(beta-hydroxyethyl)thiazole monophosphate (THZ-P) and 2-methyl-4-amino-5-hydroxymethyl pyrimidine pyrophosphate (HMP-PP) to form thiamine monophosphate (TMP). This chain is Thiamine-phosphate synthase, found in Methanocella arvoryzae (strain DSM 22066 / NBRC 105507 / MRE50).